A 247-amino-acid polypeptide reads, in one-letter code: Agamous-like MADS-box protein AGL28 (247 aa).

The MADS-box domain occupies 6–66; sequence LGRRKIELVK…GKAYSFGHPN (61 aa). Positions 91 to 168 form a coiled coil; sequence TKLRIQMLNE…VDEKVAQLHH (78 aa).

Expressed in roots, leaves and shoot apices.

The protein resides in the nucleus. Probable transcription factor that may function as a floral promoter operating upstream of known floral activators in the autonomous pathway. This is Agamous-like MADS-box protein AGL28 from Arabidopsis thaliana (Mouse-ear cress).